A 167-amino-acid polypeptide reads, in one-letter code: Leptin (167 aa).

Positions 1–21 (MRCGPLCRFLWLWPYLSYIEA) are cleaved as a signal peptide. C117 and C167 are disulfide-bonded.

Belongs to the leptin family.

It is found in the secreted. In terms of biological role, key player in the regulation of energy balance and body weight control. Once released into the circulation, has central and peripheral effects by binding LEPR, found in many tissues, which results in the activation of several major signaling pathways. In the hypothalamus, acts as an appetite-regulating factor that induces a decrease in food intake and an increase in energy consumption by inducing anorexinogenic factors and suppressing orexigenic neuropeptides, also regulates bone mass and secretion of hypothalamo-pituitary-adrenal hormones. In the periphery, increases basal metabolism, influences reproductive function, regulates pancreatic beta-cell function and insulin secretion, is pro-angiogenic for endothelial cell and affects innate and adaptive immunity. In the arcuate nucleus of the hypothalamus, activates by depolarization POMC neurons inducing FOS and SOCS3 expression to release anorexigenic peptides and inhibits by hyperpolarization NPY neurons inducing SOCS3 with a consequent reduction on release of orexigenic peptides. In addition to its known satiety inducing effect, has a modulatory role in nutrient absorption. In the intestine, reduces glucose absorption by enterocytes by activating PKC and leading to a sequential activation of p38, PI3K and ERK signaling pathways which exerts an inhibitory effect on glucose absorption. Acts as a growth factor on certain tissues, through the activation of different signaling pathways increases expression of genes involved in cell cycle regulation such as CCND1, via JAK2-STAT3 pathway, or VEGFA, via MAPK1/3 and PI3K-AKT1 pathways. May also play an apoptotic role via JAK2-STAT3 pathway and up-regulation of BIRC5 expression. Pro-angiogenic, has mitogenic activity on vascular endothelial cells and plays a role in matrix remodeling by regulating the expression of matrix metalloproteinases (MMPs) and tissue inhibitors of metalloproteinases (TIMPs). In innate immunity, modulates the activity and function of neutrophils by increasing chemotaxis and the secretion of oxygen radicals. Increases phagocytosis by macrophages and enhances secretion of pro-inflammatory mediators. Increases cytotoxic ability of NK cells. Plays a pro-inflammatory role, in synergy with IL1B, by inducing NOS2 which promotes the production of IL6, IL8 and Prostaglandin E2, through a signaling pathway that involves JAK2, PI3K, MAP2K1/MEK1 and MAPK14/p38. In adaptive immunity, promotes the switch of memory T-cells towards T helper-1 cell immune responses. Increases CD4(+)CD25(-) T-cell proliferation and reduces autophagy during TCR (T-cell receptor) stimulation, through MTOR signaling pathway activation and BCL2 up-regulation. The sequence is that of Leptin (LEP) from Ursus thibetanus (Asiatic black bear).